The chain runs to 297 residues: Phosphatidylserine decarboxylase proenzyme (297 aa).

Active-site charge relay system; for autoendoproteolytic cleavage activity residues include aspartate 92, histidine 149, and serine 254. The Schiff-base intermediate with substrate; via pyruvic acid; for decarboxylase activity role is filled by serine 254. Position 254 is a pyruvic acid (Ser); by autocatalysis (serine 254).

This sequence belongs to the phosphatidylserine decarboxylase family. PSD-B subfamily. Prokaryotic type I sub-subfamily. In terms of assembly, heterodimer of a large membrane-associated beta subunit and a small pyruvoyl-containing alpha subunit. Requires pyruvate as cofactor. Post-translationally, is synthesized initially as an inactive proenzyme. Formation of the active enzyme involves a self-maturation process in which the active site pyruvoyl group is generated from an internal serine residue via an autocatalytic post-translational modification. Two non-identical subunits are generated from the proenzyme in this reaction, and the pyruvate is formed at the N-terminus of the alpha chain, which is derived from the carboxyl end of the proenzyme. The autoendoproteolytic cleavage occurs by a canonical serine protease mechanism, in which the side chain hydroxyl group of the serine supplies its oxygen atom to form the C-terminus of the beta chain, while the remainder of the serine residue undergoes an oxidative deamination to produce ammonia and the pyruvoyl prosthetic group on the alpha chain. During this reaction, the Ser that is part of the protease active site of the proenzyme becomes the pyruvoyl prosthetic group, which constitutes an essential element of the active site of the mature decarboxylase.

The protein localises to the cell membrane. The enzyme catalyses a 1,2-diacyl-sn-glycero-3-phospho-L-serine + H(+) = a 1,2-diacyl-sn-glycero-3-phosphoethanolamine + CO2. The protein operates within phospholipid metabolism; phosphatidylethanolamine biosynthesis; phosphatidylethanolamine from CDP-diacylglycerol: step 2/2. Catalyzes the formation of phosphatidylethanolamine (PtdEtn) from phosphatidylserine (PtdSer). This is Phosphatidylserine decarboxylase proenzyme from Bordetella parapertussis (strain 12822 / ATCC BAA-587 / NCTC 13253).